Consider the following 337-residue polypeptide: MRVLGIETSCDETGIAIYDDEKGLLANQLYSQVKLHADYGGVVPELASRDHVRKTVPLIQAALKESGLTAKDIDAVAYTAGPGLVGALLVGATIGRSLAFAWDVPAIPVHHMEGHLLAPMLEENPPEFPFVALLVSGGHTQLISVTGIGEYELLGESIDDAAGEAFDKTAKLLGLDYPGGPMLSKLASQGVEKRFVFPRPMTDRPGLDFSFSGLKTFAANTIRNNENDDQTRADIARAFEDAVVDTLMIKCKRALDQTGFTRLVMAGGVSANRTLRTRLEEMMQKRRGEVFYARPEFCTDNGAMIAYAGMVRVKGGATADLSVSVRPRWPLAELPAA.

Residues His-111 and His-115 each coordinate Fe cation. Substrate contacts are provided by residues 134 to 138 (LVSGG), Asp-167, Gly-180, and Asn-272. Asp-300 lines the Fe cation pocket.

The protein belongs to the KAE1 / TsaD family. It depends on Fe(2+) as a cofactor.

It is found in the cytoplasm. It catalyses the reaction L-threonylcarbamoyladenylate + adenosine(37) in tRNA = N(6)-L-threonylcarbamoyladenosine(37) in tRNA + AMP + H(+). Required for the formation of a threonylcarbamoyl group on adenosine at position 37 (t(6)A37) in tRNAs that read codons beginning with adenine. Is involved in the transfer of the threonylcarbamoyl moiety of threonylcarbamoyl-AMP (TC-AMP) to the N6 group of A37, together with TsaE and TsaB. TsaD likely plays a direct catalytic role in this reaction. This is tRNA N6-adenosine threonylcarbamoyltransferase from Enterobacter sp. (strain 638).